The following is a 277-amino-acid chain: Small ribosomal subunit protein uS2 (277 aa).

Composition is skewed to basic and acidic residues over residues 227 to 256 and 267 to 277; these read QARA…RTEA and SEAKAEGNTEA. Positions 227 to 277 are disordered; the sequence is QARAERQEAAAKEAAGDADKAPAEAERTEAPAEEAPAEAQSEAKAEGNTEA.

Belongs to the universal ribosomal protein uS2 family.

The protein is Small ribosomal subunit protein uS2 of Corynebacterium jeikeium (strain K411).